Consider the following 430-residue polypeptide: MTNLNCFGRHRRRTAPHNATGSRSELVAPPIHSRINGWSSPLHSFQFIALLIFSFMAIVAFGIYVPLLPAPWSYAAYALIGSAFVLHLFSHVTAVTIDPADVNVRRRKDYSSPMPTFDNSKHPHVIDNLHCTLCEVDVSPKAKHCSTCNKCIADFDHHCKWLNNCVGGRNYWFFFTAVSSAVIGVILLIPLVLFVFIEHYVNPAVLRTAPQFQTVKGNGTWLVFLPVAPVETSSISLLVVSFITALLSLAALLLLCHLLCFHIYLLSQGISTYEYIVRKRQSPNPKEKQQVPPALPSNGATAQSLELQEPPLNCDAPLSSRSCTFKLEDRGPMPEPICAEMEEASGEHHLSYSSESATQKIAGESVMSLPVVWSLSETERPQASQVEVKPLEGRPVVQDPLGSSIMDTALVHQQLMTEQPQYLHFKQKMP.

Residues 1-46 (MTNLNCFGRHRRRTAPHNATGSRSELVAPPIHSRINGWSSPLHSFQ) lie on the Cytoplasmic side of the membrane. The helical transmembrane segment at 47-67 (FIALLIFSFMAIVAFGIYVPL) threads the bilayer. Residues 68–76 (LPAPWSYAA) are Lumenal-facing. The helical transmembrane segment at 77–97 (YALIGSAFVLHLFSHVTAVTI) threads the bilayer. Residues 98-176 (DPADVNVRRR…GGRNYWFFFT (79 aa)) are Cytoplasmic-facing. The 51-residue stretch at 129 to 179 (LHCTLCEVDVSPKAKHCSTCNKCIADFDHHCKWLNNCVGGRNYWFFFTAVS) folds into the DHHC domain. C159 (S-palmitoyl cysteine intermediate) is an active-site residue. A helical transmembrane segment spans residues 177 to 197 (AVSSAVIGVILLIPLVLFVFI). Topologically, residues 198–234 (EHYVNPAVLRTAPQFQTVKGNGTWLVFLPVAPVETSS) are lumenal. The chain crosses the membrane as a helical span at residues 235-255 (ISLLVVSFITALLSLAALLLL). The Cytoplasmic portion of the chain corresponds to 256–430 (CHLLCFHIYL…QYLHFKQKMP (175 aa)).

Belongs to the DHHC palmitoyltransferase family.

It localises to the endoplasmic reticulum membrane. It catalyses the reaction L-cysteinyl-[protein] + hexadecanoyl-CoA = S-hexadecanoyl-L-cysteinyl-[protein] + CoA. Endoplasmic reticulum-localized palmitoyltransferase that could catalyze the addition of palmitate onto protein substrates. This Danio rerio (Zebrafish) protein is Palmitoyltransferase ZDHHC11.